A 71-amino-acid chain; its full sequence is Conotoxin LvVIB (71 aa).

The N-terminal stretch at 1-17 is a signal peptide; that stretch reads VLIIAVLFLTASELVTA. Positions 18 to 41 are excised as a propeptide; the sequence is DYTRDKWQYRAASLRDAMRNFRDT. Disulfide bonds link Cys-43/Cys-57, Cys-50/Cys-62, and Cys-56/Cys-69.

Belongs to the conotoxin O1 superfamily. Expressed by the venom duct.

Its subcellular location is the secreted. The chain is Conotoxin LvVIB from Conus lividus (Livid cone).